The primary structure comprises 461 residues: uncharacterized protein (461 aa).

Disordered regions lie at residues 254-273 and 368-414; these read NNNN…NNNN and QPSQ…NNNS. Low complexity predominate over residues 381–413; the sequence is NNNNNNNNNNNNNNNNNNNNNNNNNNNNNNNNN.

This is an uncharacterized protein from Dictyostelium discoideum (Social amoeba).